The sequence spans 246 residues: Indole-3-glycerol phosphate synthase (246 aa).

The protein belongs to the TrpC family.

The enzyme catalyses 1-(2-carboxyphenylamino)-1-deoxy-D-ribulose 5-phosphate + H(+) = (1S,2R)-1-C-(indol-3-yl)glycerol 3-phosphate + CO2 + H2O. It functions in the pathway amino-acid biosynthesis; L-tryptophan biosynthesis; L-tryptophan from chorismate: step 4/5. This is Indole-3-glycerol phosphate synthase from Sulfurisphaera tokodaii (strain DSM 16993 / JCM 10545 / NBRC 100140 / 7) (Sulfolobus tokodaii).